The following is a 930-amino-acid chain: Probable SapB synthase (930 aa).

In terms of domain architecture, Protein kinase spans tyrosine 256–arginine 516. ATP is bound by residues leucine 262–valine 270 and lysine 285. The Proton acceptor role is filled by aspartate 395. The chain crosses the membrane as a helical span at residues tyrosine 447–aspartate 467. Basic and acidic residues predominate over residues glycine 501–threonine 527. 2 disordered regions span residues glycine 501–methionine 558 and proline 911–proline 930. Over residues alanine 532–valine 546 the composition is skewed to low complexity. A compositionally biased stretch (basic and acidic residues) spans arginine 547–aspartate 556.

This sequence in the N-terminal section; belongs to the protein kinase superfamily.

Its subcellular location is the cell membrane. Functionally, required for aerial hyphae formation. Probably involved in processing the precursor of SapB to its mature form. The sequence is that of Probable SapB synthase from Streptomyces coelicolor (strain ATCC BAA-471 / A3(2) / M145).